Consider the following 104-residue polypeptide: N(2)-fixation sustaining protein CowN (104 aa).

It belongs to the CowN family.

Functionally, is required to sustain N(2)-dependent growth in the presence of low levels of carbon monoxide (CO). Probably acts by protecting the N(2) fixation ability of the nitrogenase complex, which is inactivated in the presence of CO. The polypeptide is N(2)-fixation sustaining protein CowN (Arcobacter nitrofigilis (strain ATCC 33309 / DSM 7299 / CCUG 15893 / LMG 7604 / NCTC 12251 / CI) (Campylobacter nitrofigilis)).